A 321-amino-acid chain; its full sequence is Probable protein phosphatase methylesterase 1 (321 aa).

Residues Ser-170, Asp-195, and His-307 contribute to the active site.

Belongs to the AB hydrolase superfamily.

The catalysed reaction is [phosphatase 2A protein]-C-terminal L-leucine methyl ester + H2O = [phosphatase 2A protein]-C-terminal L-leucine + methanol + H(+). In terms of biological role, demethylates proteins that have been reversibly carboxymethylated. This chain is Probable protein phosphatase methylesterase 1 (ppme1), found in Dictyostelium discoideum (Social amoeba).